The chain runs to 208 residues: Protein-L-isoaspartate O-methyltransferase (208 aa).

The active site involves S59.

It belongs to the methyltransferase superfamily. L-isoaspartyl/D-aspartyl protein methyltransferase family.

It is found in the cytoplasm. It catalyses the reaction [protein]-L-isoaspartate + S-adenosyl-L-methionine = [protein]-L-isoaspartate alpha-methyl ester + S-adenosyl-L-homocysteine. Functionally, catalyzes the methyl esterification of L-isoaspartyl residues in peptides and proteins that result from spontaneous decomposition of normal L-aspartyl and L-asparaginyl residues. It plays a role in the repair and/or degradation of damaged proteins. The chain is Protein-L-isoaspartate O-methyltransferase from Yersinia enterocolitica serotype O:8 / biotype 1B (strain NCTC 13174 / 8081).